The primary structure comprises 118 residues: Disulfide bond formation protein (118 aa).

A signal peptide spans 1–27; sequence MRAKWLWMTAVGSLLITVLTAWGWAAA. The Thioredoxin domain occupies 28–114; sequence SSQDSKIVYV…VAEAVLRSFF (87 aa). The cysteines at positions 42 and 45 are disulfide-linked.

The protein belongs to the thioredoxin family.

It localises to the secreted. Its function is as follows. Stimulates the oxidation and reduction of disulfide bonds in vitro. This is Disulfide bond formation protein (bdb) from Brevibacillus choshinensis.